We begin with the raw amino-acid sequence, 159 residues long: U1 small nuclear ribonucleoprotein C (159 aa).

The segment at Phe4 to Asp36 adopts a Matrin-type zinc-finger fold. Disordered regions lie at residues Pro63 to Pro95 and Met139 to Arg159. Pro residues predominate over residues Ile77–Pro95.

It belongs to the U1 small nuclear ribonucleoprotein C family. As to quaternary structure, component of the U1 snRNP. The U1 snRNP is composed of the U1 snRNA and the 7 core Sm proteins snrpb, snrpd1, snrpd2, snrpd3, snrpe, snrpf and snrpg that assemble in a heptameric protein ring on the Sm site of the small nuclear RNA to form the core snRNP, and at least 3 U1 snRNP-specific proteins snrnp70/U1-70K, snrpa/U1-A and snrpc/U1-C. snrpc/U1-C interacts with U1 snRNA and the 5' splice-site region of the pre-mRNA.

It localises to the nucleus. Component of the spliceosomal U1 snRNP, which is essential for recognition of the pre-mRNA 5' splice-site and the subsequent assembly of the spliceosome. snrpc/U1-C is directly involved in initial 5' splice-site recognition for both constitutive and regulated alternative splicing. The interaction with the 5' splice-site seems to precede base-pairing between the pre-mRNA and the U1 snRNA. Stimulates commitment or early (E) complex formation by stabilizing the base pairing of the 5' end of the U1 snRNA and the 5' splice-site region. This Xenopus tropicalis (Western clawed frog) protein is U1 small nuclear ribonucleoprotein C.